The following is a 99-amino-acid chain: Integration host factor subunit alpha (99 aa).

This sequence belongs to the bacterial histone-like protein family. In terms of assembly, heterodimer of an alpha and a beta chain.

Its function is as follows. This protein is one of the two subunits of integration host factor, a specific DNA-binding protein that functions in genetic recombination as well as in transcriptional and translational control. This Anaeromyxobacter sp. (strain Fw109-5) protein is Integration host factor subunit alpha.